Consider the following 223-residue polypeptide: Ras-related protein Rab-21 (223 aa).

A2 is modified (N-acetylalanine). GTP-binding residues include G26, G29, K30, T31, S32, N43, D44, H46, T48, and T49. T31 contacts Mg(2+). Positions 41-54 (KFNDKHITTLQASF) match the Switch 1 motif. 2 residues coordinate Mg(2+): T49 and D72. Positions 74-92 (AGQERFHALGPIYYRDSNG) match the Switch 2 motif. GTP contacts are provided by G75, N130, K131, D133, A161, and K162. S-geranylgeranyl cysteine attachment occurs at residues C219 and C220. Position 220 is a cysteine methyl ester (C220). The propeptide at 221 to 223 (SSG) is removed in mature form.

The protein belongs to the small GTPase superfamily. Rab family. As to quaternary structure, interacts with the cytoplasmic tail of integrins ITGA1, ITGA2, ITGA5, ITGA6, ITGA11 and ITGB1; this interaction is dependent upon its GDP/GTP cycle. Interacts with RABGEF1 (via VPS9 domain). Interacts with ANKRD27. Interacts (in GTP-bound form) with VAMP8 in response to starvation; the interaction probably regulates VAMP8 endolysosomal trafficking. Interacts (active GTP-bound form) with TMED10; the interaction is indirect and regulates TMED10 abundance and localization at the Golgi. The cofactor is Mg(2+).

Its subcellular location is the endoplasmic reticulum membrane. The protein localises to the golgi apparatus. It localises to the trans-Golgi network. The protein resides in the golgi apparatus membrane. It is found in the early endosome membrane. Its subcellular location is the cytoplasmic vesicle membrane. The protein localises to the cleavage furrow. It localises to the cell projection. The protein resides in the neuron projection. The catalysed reaction is GTP + H2O = GDP + phosphate + H(+). Regulated by guanine nucleotide exchange factors (GEFs) including ANKRD27 and RABGEF1, which promote the exchange of bound GDP for free GTP. Regulated by GTPase activating proteins (GAPs) which increase the GTP hydrolysis activity. Inhibited by GDP dissociation inhibitors (GDIs). The small GTPases Rab are key regulators of intracellular membrane trafficking, from the formation of transport vesicles to their fusion with membranes. Rabs cycle between an inactive GDP-bound form and an active GTP-bound form that is able to recruit to membranes different sets of downstream effectors directly responsible for vesicle formation, movement, tethering and fusion. RAB21 is involved in membrane trafficking control. Regulates integrin internalization and recycling, but does not influence the traffic of endosomally translocated receptors in general. As a result, may regulate cell adhesion and migration. During the mitosis of adherent cells, controls the endosomal trafficking of integrins which is required for the successful completion of cytokinesis. Involved in neurite growth. Following SBF2/MTMT13-mediated activation in response to starvation-induced autophagy, binds to and regulates SNARE protein VAMP8 endolysosomal transport required for SNARE-mediated autophagosome-lysosome fusion. Modulates protein levels of the cargo receptors TMED2 and TMED10, and required for appropriate Golgi localization of TMED10. In Rattus norvegicus (Rat), this protein is Ras-related protein Rab-21.